Consider the following 326-residue polypeptide: Putative HTH-type transcriptional regulatory protein MmarC7_1702 (326 aa).

An HTH cro/C1-type domain is found at 128 to 183; it reads LRETREKLKISVGELAEISRVSRKTIYKYEQNEANPSAEVAIKIEEYLDVPLIKGI. Residues 139–158 constitute a DNA-binding region (H-T-H motif); it reads VGELAEISRVSRKTIYKYEQ.

The sequence is that of Putative HTH-type transcriptional regulatory protein MmarC7_1702 from Methanococcus maripaludis (strain C7 / ATCC BAA-1331).